The chain runs to 487 residues: Betaine aldehyde dehydrogenase (487 aa).

Residues Ile-27 and Asp-93 each contribute to the K(+) site. Gly-149–Trp-151 lines the NAD(+) pocket. Lys-161 (charge relay system) is an active-site residue. NAD(+) contacts are provided by residues Lys-175–Glu-178 and Ser-228–Thr-231. A K(+)-binding site is contributed by Leu-243. Glu-249 functions as the Proton acceptor in the catalytic mechanism. Residues Gly-251, Cys-283, and Glu-384 each coordinate NAD(+). Catalysis depends on Cys-283, which acts as the Nucleophile. The residue at position 283 (Cys-283) is a Cysteine sulfenic acid (-SOH). Positions 454 and 457 each coordinate K(+). Glu-461 serves as the catalytic Charge relay system.

Belongs to the aldehyde dehydrogenase family. As to quaternary structure, dimer of dimers. K(+) serves as cofactor.

It catalyses the reaction betaine aldehyde + NAD(+) + H2O = glycine betaine + NADH + 2 H(+). The protein operates within amine and polyamine biosynthesis; betaine biosynthesis via choline pathway; betaine from betaine aldehyde: step 1/1. Its function is as follows. Involved in the biosynthesis of the osmoprotectant glycine betaine. Catalyzes the irreversible oxidation of betaine aldehyde to the corresponding acid. This is Betaine aldehyde dehydrogenase from Brucella anthropi (strain ATCC 49188 / DSM 6882 / CCUG 24695 / JCM 21032 / LMG 3331 / NBRC 15819 / NCTC 12168 / Alc 37) (Ochrobactrum anthropi).